Here is a 493-residue protein sequence, read N- to C-terminus: Glutamyl-tRNA(Gln) amidotransferase subunit A (493 aa).

Catalysis depends on charge relay system residues lysine 78 and serine 158. Serine 182 serves as the catalytic Acyl-ester intermediate.

This sequence belongs to the amidase family. GatA subfamily. Heterotrimer of A, B and C subunits.

It carries out the reaction L-glutamyl-tRNA(Gln) + L-glutamine + ATP + H2O = L-glutaminyl-tRNA(Gln) + L-glutamate + ADP + phosphate + H(+). Functionally, allows the formation of correctly charged Gln-tRNA(Gln) through the transamidation of misacylated Glu-tRNA(Gln) in organisms which lack glutaminyl-tRNA synthetase. The reaction takes place in the presence of glutamine and ATP through an activated gamma-phospho-Glu-tRNA(Gln). This chain is Glutamyl-tRNA(Gln) amidotransferase subunit A, found in Rickettsia typhi (strain ATCC VR-144 / Wilmington).